The sequence spans 450 residues: Crinkler effector protein 63 (450 aa).

The signal sequence occupies residues 1–17 (MVKLFCAIVGAAGSAFP). Positions 18-55 (VDIDAGQSAGDLKDAIKAKNPATITCDAKDLQLSLAKT) are LQLFLAK domain. The tract at residues 58-117 (GAWLPDDDQAALDLEDGKVHEDIQALIDGEKMKATWTIEDVLTANNMTKRKGRAPKSRQI) is DWL domain. N103 carries an N-linked (GlcNAc...) asparagine glycan. Residues 118–124 (HVLVVVP) carry the HVLVXXP motif motif. The effector domain stretch occupies residues 125 to 450 (EGAFGSASET…RSIPTFSYFS (326 aa)). The Nuclear localization signal (NLS) signature appears at 218 to 224 (QRKRYRR). N342 is a glycosylation site (N-linked (GlcNAc...) asparagine).

Belongs to the Crinkler effector family. As to quaternary structure, forms a homodimer via an inverted association manner. Forms heterodimers with CRN79 and CRN115.

Its subcellular location is the secreted. The protein resides in the host nucleus. It is found in the host nucleoplasm. Secreted effector that, with CRN115, is critical to pathogenesis by modulating host defenses. Induces cell death in plant host cells. Suppresses callose deposition and affects expression of defense-related genes including two salicylic acid (SA) signal-induced and antimicrobial PR genes (PR1 and PR2), and genes involved in jasmonic acid (JA)/ethylene (ET)-mediated defense pathway (ERF1, ORA59, PDF1.2). CRN115 and CRN63 may share the same molecular host targets that are involved in the cell death signal transduction pathway and that their differential activities are dependent on plant nuclear localization or not. Does not affect MAPK activation and BIK1 phosphorylation and acts downstream of the MAPK cascades in PTI signaling. The protein is Crinkler effector protein 63 of Phytophthora sojae (strain P6497) (Soybean stem and root rot agent).